Consider the following 182-residue polypeptide: Plasmolipin (182 aa).

Residues 1–20 (MAEFPSKVSTRTSSPAQGVG) form a disordered region. Residues 1–35 (MAEFPSKVSTRTSSPAQGVGASVSAMRPDLGFVRS) lie on the Cytoplasmic side of the membrane. Over residues 7 to 16 (KVSTRTSSPA) the composition is skewed to polar residues. A Phosphoserine modification is found at S9. The MARVEL domain maps to 32–166 (FVRSALGVLA…SAFFSFQAWR (135 aa)). A helical membrane pass occupies residues 36–56 (ALGVLALLQLVLGLLVWALIA). The Extracellular portion of the chain corresponds to 57–68 (DTPYHLYPAYGW). A helical membrane pass occupies residues 69 to 89 (VMFVAVFLWLVTIVFFIIYLF). The Cytoplasmic portion of the chain corresponds to 90–99 (QLHMKLYMVP). A helical transmembrane segment spans residues 100–120 (WPLVLLVFFVAATVLYITAFV). The Extracellular portion of the chain corresponds to 121–141 (ACAAAVDLTSLRGSRPYNQRS). Residues 142-162 (AASFFACLVMIAYGLSAFFSF) form a helical membrane-spanning segment. Residues 163–182 (QAWRGVGSNAATSQMAGGYS) lie on the Cytoplasmic side of the membrane.

The protein belongs to the MAL family. In terms of assembly, forms oligomers. In terms of processing, phosphorylated. Detected to the sciatic nerve, brain and kidney. In the sciatic nerve, found in Schwann cells; in the brain, in developing oligodendrocytes, especially of the corpus callosum, of cortical white matter, in the optic nerve and in the stratum radiatum and stratum oriens of the hippocampus. In kidney, segregated to the apical surface of renal tubular epithelia.

The protein localises to the cell membrane. It is found in the myelin membrane. Its subcellular location is the apical cell membrane. Its function is as follows. Main component of the myelin sheath that plays an important role in myelin membrane biogenesis and myelination. Plays an essential function in apical endocytosis. Regulates epithelial development through the regulation of apical endocytosis. Part of the intracellular machinery that mediates basolateral-to-apical transport of ICAM-1, an essential adhesion receptor in epithelial cells, from the subapical compartment in hepatic epithelial cells. The sequence is that of Plasmolipin (Pllp) from Rattus norvegicus (Rat).